Consider the following 138-residue polypeptide: Basic phospholipase A2 Cll-N6 (138 aa).

Residues 1 to 16 (MRTFWIVAVLLVGVEG) form the signal peptide. Disulfide bonds link Cys-42–Cys-131, Cys-44–Cys-60, Cys-59–Cys-111, Cys-65–Cys-138, Cys-66–Cys-104, Cys-73–Cys-97, and Cys-91–Cys-102. Ca(2+)-binding residues include Tyr-43, Gly-45, and Gly-47. The active site involves His-63. Asp-64 serves as a coordination point for Ca(2+). Asp-105 is an active-site residue.

Monomer. It depends on Ca(2+) as a cofactor. Expressed by the venom gland.

The protein resides in the secreted. It catalyses the reaction a 1,2-diacyl-sn-glycero-3-phosphocholine + H2O = a 1-acyl-sn-glycero-3-phosphocholine + a fatty acid + H(+). Its function is as follows. Snake venom phospholipase A2 (PLA2) that shows myotoxic activities. PLA2 catalyzes the calcium-dependent hydrolysis of the 2-acyl groups in 3-sn-phosphoglycerides. This is Basic phospholipase A2 Cll-N6 from Crotalus lepidus lepidus (Mottled rock rattlesnake).